Here is a 244-residue protein sequence, read N- to C-terminus: Inner kinetochore subunit fta7 (244 aa).

This sequence belongs to the CENP-Q/OKP1 family. As to quaternary structure, component of the heterotetrameric kinetochore subcomplex COMA, which consists of fta2, fta7, mal2 and mis17. The COMA subcomplex is part of a larger constitutive centromere-associated network (CCAN) (also known as central kinetochore Sim4 complex in fission yeast), which is composed of at least cnl2, cnp3, cnp20, fta1, fta2, fta3, fta4, fta6, fta7, mal2, mhf1, mhf2, mis6, mis15, mis17, sim4 and wip1.

It is found in the nucleus. Its subcellular location is the chromosome. The protein resides in the centromere. The protein localises to the kinetochore. It localises to the cytoplasm. It is found in the cytoskeleton. Its subcellular location is the microtubule organizing center. The protein resides in the spindle pole body. Component of the kinetochore, a multiprotein complex that assembles on centromeric DNA and attaches chromosomes to spindle microtubules, mediating chromosome segregation and sister chromatid segregation during meiosis and mitosis. Component of the inner kinetochore COMA complex, which connects centromere-associated proteins and the outer kinetochore. COMA interacts with other inner kinetochore proteins to form the inner kinetochore constitutive centromere-associated network (CCAN), which serves as a structural platform for outer kinetochore assembly. This chain is Inner kinetochore subunit fta7 (fta7), found in Schizosaccharomyces pombe (strain 972 / ATCC 24843) (Fission yeast).